The following is a 356-amino-acid chain: MKDITAMVVVQIATAGLNIFFKLAMEDGMNPSVLVAYRLLFATLFMIPICFIFQRKKRPEFTCRLMLLALLSGLLGVVIPSILTITGLALTSATFTSAAGVLTPLVTFIFAALLRMESVRLGSSVGLAKVFGTLFGVGGALVFIFYRGIEIRLWSTHVNLVNQPRDSSRDATTHHISILGALLVFGGNISISLWFLLQVKISKQFGGPYWNATLMNMMGGVVAMLVALCWEHDLDEWRLGWNIRLLTIAYAAILISGMVVAVNAWCIESRGPLFVSVFSPVGLVIVALVGSFLLDETLHLGSIIGTVIIVGALYIVLWAKNKEMKSMLTTSDHNETNKTSKDITVNNLPTLSTNVP.

10 helical membrane passes run 4-24 (ITAMVVVQIATAGLNIFFKLA), 33-53 (VLVAYRLLFATLFMIPICFIF), 65-85 (LMLLALLSGLLGVVIPSILTI), 94-114 (TFTSAAGVLTPLVTFIFAALL), 125-145 (VGLAKVFGTLFGVGGALVFIF), 176-196 (ISILGALLVFGGNISISLWFL), 210-230 (WNATLMNMMGGVVAMLVALCW), 245-265 (LLTIAYAAILISGMVVAVNAW), 273-293 (LFVSVFSPVGLVIVALVGSFL), and 298-318 (LHLGSIIGTVIIVGALYIVLW). 2 consecutive EamA domains span residues 14–142 (TAGL…GALV) and 191–317 (ISLW…YIVL).

This sequence belongs to the drug/metabolite transporter (DMT) superfamily. Plant drug/metabolite exporter (P-DME) (TC 2.A.7.4) family.

The protein resides in the membrane. The sequence is that of WAT1-related protein At1g68170 from Arabidopsis thaliana (Mouse-ear cress).